Consider the following 213-residue polypeptide: Redox-sensing transcriptional repressor Rex (213 aa).

A DNA-binding region (H-T-H motif) is located at residues 16–55 (VYSRFLERMDRNGIVTVSSGEIAEGVGVSSAQVRKDLAYF). 90 to 95 (GAGNLG) serves as a coordination point for NAD(+).

This sequence belongs to the transcriptional regulatory Rex family. In terms of assembly, homodimer.

It is found in the cytoplasm. In terms of biological role, modulates transcription in response to changes in cellular NADH/NAD(+) redox state. This chain is Redox-sensing transcriptional repressor Rex, found in Pelotomaculum thermopropionicum (strain DSM 13744 / JCM 10971 / SI).